Consider the following 125-residue polypeptide: Fluoride-specific ion channel FluC (125 aa).

2 helical membrane-spanning segments follow: residues 4–24 (LWVA…GVWI) and 34–54 (YGTF…LTVL). Na(+)-binding residues include Gly74 and Thr77. The chain crosses the membrane as a helical span at residues 99–119 (VLYFGSSLALGILAVWLGMVV).

The protein belongs to the fluoride channel Fluc/FEX (TC 1.A.43) family.

The protein localises to the cell inner membrane. The catalysed reaction is fluoride(in) = fluoride(out). Its activity is regulated as follows. Na(+) is not transported, but it plays an essential structural role and its presence is essential for fluoride channel function. Its function is as follows. Fluoride-specific ion channel. Important for reducing fluoride concentration in the cell, thus reducing its toxicity. In Acidobacterium capsulatum (strain ATCC 51196 / DSM 11244 / BCRC 80197 / JCM 7670 / NBRC 15755 / NCIMB 13165 / 161), this protein is Fluoride-specific ion channel FluC.